The sequence spans 171 residues: S-ribosylhomocysteine lyase (171 aa).

3 residues coordinate Fe cation: His54, His58, and Cys128.

Belongs to the LuxS family. In terms of assembly, homodimer. The cofactor is Fe cation.

The catalysed reaction is S-(5-deoxy-D-ribos-5-yl)-L-homocysteine = (S)-4,5-dihydroxypentane-2,3-dione + L-homocysteine. Functionally, involved in the synthesis of autoinducer 2 (AI-2) which is secreted by bacteria and is used to communicate both the cell density and the metabolic potential of the environment. The regulation of gene expression in response to changes in cell density is called quorum sensing. Catalyzes the transformation of S-ribosylhomocysteine (RHC) to homocysteine (HC) and 4,5-dihydroxy-2,3-pentadione (DPD). The protein is S-ribosylhomocysteine lyase of Cronobacter sakazakii (strain ATCC BAA-894) (Enterobacter sakazakii).